The chain runs to 223 residues: Deoxyribose-phosphate aldolase (223 aa).

Residue aspartate 91 is the Proton donor/acceptor of the active site. Lysine 153 acts as the Schiff-base intermediate with acetaldehyde in catalysis. The active-site Proton donor/acceptor is the lysine 183.

The protein belongs to the DeoC/FbaB aldolase family. DeoC type 1 subfamily.

It localises to the cytoplasm. It catalyses the reaction 2-deoxy-D-ribose 5-phosphate = D-glyceraldehyde 3-phosphate + acetaldehyde. The protein operates within carbohydrate degradation; 2-deoxy-D-ribose 1-phosphate degradation; D-glyceraldehyde 3-phosphate and acetaldehyde from 2-deoxy-alpha-D-ribose 1-phosphate: step 2/2. Functionally, catalyzes a reversible aldol reaction between acetaldehyde and D-glyceraldehyde 3-phosphate to generate 2-deoxy-D-ribose 5-phosphate. This chain is Deoxyribose-phosphate aldolase, found in Mycoplasmopsis synoviae (strain 53) (Mycoplasma synoviae).